Consider the following 85-residue polypeptide: Putative membrane protein insertion efficiency factor (85 aa).

The protein belongs to the UPF0161 family.

It localises to the cell inner membrane. Functionally, could be involved in insertion of integral membrane proteins into the membrane. This Shewanella woodyi (strain ATCC 51908 / MS32) protein is Putative membrane protein insertion efficiency factor.